The following is a 430-amino-acid chain: Dihydrolipoyllysine-residue acetyltransferase component of pyruvate dehydrogenase complex (430 aa).

Positions 2 to 77 constitute a Lipoyl-binding domain; that stretch reads AFEFRLPDIG…VVGDVIVKID (76 aa). Lys43 carries the N6-lipoyllysine modification. The segment at 80–122 is disordered; it reads DAEDMQFKGHDDDSSSKEEPAKEEAPAEQAPVATQTEEVDENR. A compositionally biased stretch (basic and acidic residues) spans 84–104; sequence MQFKGHDDDSSSKEEPAKEEA. The region spanning 125–162 is the Peripheral subunit-binding (PSBD) domain; that stretch reads KAMPSVRKYAREKGVNIKAVSGSGKNGRITKEDVDAYL. The disordered stretch occupies residues 165–199; it reads GAPTASNESAASATNEEVAETPAAPAAVSLEGDFP. Low complexity predominate over residues 168–192; it reads TASNESAASATNEEVAETPAAPAAV. The active site involves His401.

It belongs to the 2-oxoacid dehydrogenase family. Forms a 24-polypeptide structural core with octahedral symmetry. The cofactor is (R)-lipoate.

It carries out the reaction N(6)-[(R)-dihydrolipoyl]-L-lysyl-[protein] + acetyl-CoA = N(6)-[(R)-S(8)-acetyldihydrolipoyl]-L-lysyl-[protein] + CoA. The pyruvate dehydrogenase complex catalyzes the overall conversion of pyruvate to acetyl-CoA and CO(2). It contains multiple copies of three enzymatic components: pyruvate dehydrogenase (E1), dihydrolipoamide acetyltransferase (E2) and lipoamide dehydrogenase (E3). This chain is Dihydrolipoyllysine-residue acetyltransferase component of pyruvate dehydrogenase complex (pdhC), found in Staphylococcus aureus (strain MRSA252).